Here is a 398-residue protein sequence, read N- to C-terminus: DJ-1 protein homolog E (398 aa).

PfpI endopeptidase domains lie at 7–199 (KSAL…ESLG) and 210–393 (ASVL…TALG).

It belongs to the peptidase C56 family. As to quaternary structure, homotrimer. As to expression, expressed in roots and cauline leaves.

Functionally, may be involved in oxidative stress response. This is DJ-1 protein homolog E (DJ1E) from Arabidopsis thaliana (Mouse-ear cress).